The following is a 3210-amino-acid chain: PF 1022-synthetase (3210 aa).

Positions 68–454 are condensation 1; that stretch reads VDDRRHAIGH…VKELDVVTAE (387 aa). The interval 483–876 is adenylation 1; sequence AGDPNKAAVF…GRKDSQVKIR (394 aa). The 77-residue stretch at 1010 to 1086 folds into the Carrier 1 domain; it reads APATGIEVKL…GLVDVIGRDP (77 aa). O-(pantetheine 4'-phosphoryl)serine is present on Ser-1047. Residues 1104–1534 form a condensation 2 region; sequence SFAQGRLWFL…RTPIAVLPLT (431 aa). Positions 1563-2023 are adenylation 2; the sequence is FRKQVAAHPH…GRMDQQVKIR (461 aa). The S-adenosyl-L-methionine-dependent N-methyltransferase stretch occupies residues 2081 to 2236; the sequence is EGWKDFFESN…YLLEVVESLV (156 aa). Carrier domains are found at residues 2570–2644 and 2668–2742; these read DPFV…RQGL and TPSD…RLTQ. 2 positions are modified to O-(pantetheine 4'-phosphoryl)serine: Ser-2604 and Ser-2702. A condensation 3 region spans residues 2788-3203; that stretch reads LDVYPATQMQ…KRMLEELCGN (416 aa). The tract at residues 2976 to 3002 is disordered; sequence VIKGNNNTTPPPPPQQQSTPSGAHHAS.

This sequence belongs to the NRP synthetase family. Requires pantetheine 4'-phosphate as cofactor.

It catalyses the reaction 2 (R)-3-phenyllactate + 2 (R)-lactate + 4 L-leucine + 4 S-adenosyl-L-methionine + 8 ATP = PF1022A + 8 AMP + 4 S-adenosyl-L-homocysteine + 8 diphosphate + 8 H(+). The enzyme catalyses 4 (R)-3-phenyllactate + 4 L-leucine + 4 S-adenosyl-L-methionine + 8 ATP = PF1022B + 8 AMP + 4 S-adenosyl-L-homocysteine + 8 diphosphate + 8 H(+). The catalysed reaction is 3 (R)-3-phenyllactate + (R)-lactate + 4 L-leucine + 4 S-adenosyl-L-methionine + 8 ATP = PF1022C + 8 AMP + 4 S-adenosyl-L-homocysteine + 8 diphosphate + 8 H(+). It carries out the reaction (R)-3-phenyllactate + 3 (R)-lactate + 4 L-leucine + 4 S-adenosyl-L-methionine + 8 ATP = PF1022D + 8 AMP + 4 S-adenosyl-L-homocysteine + 8 diphosphate + 8 H(+). It catalyses the reaction 4 (R)-lactate + 4 L-leucine + 4 S-adenosyl-L-methionine + 8 ATP = PF1022F + 8 AMP + 4 S-adenosyl-L-homocysteine + 8 diphosphate + 8 H(+). In terms of biological role, nonribosomal peptide synthetase that synthesizes cyclooctadepsipeptides (CODPs) PF 1022 that show powerful broad-spectrum anthelmintic activity with low toxicity in animals. Couples 4 N-methyl-L-leucines and a varying content of alpha-D-hydroxy acids (D-lactates or D-phenyllactates) in an alternative fashion. The enzyme is capable of synthesizing all known natural cyclooctadepsipeptides of the PF1022 type differing in the content of D-lactate and D-phenyllactate, using from 4 D-lactates (PF 1022F) to 4 D-phenyllactates (PF 1022B), respectively. The formation of different PF-related compounds is mainly controlled by the molar ratio of the hydroxy acids. N-methylation of the substrate L-leucine takes place after covalent binding prior to peptide bond formation. This Rosellinia sp. (Mycelia sterilia) protein is PF 1022-synthetase.